The sequence spans 286 residues: Translocon-associated protein subunit alpha (286 aa).

The signal sequence occupies residues 1 to 18 (MRLLPRLLLLLLLVFPAT). Topologically, residues 19–207 (VLFRGGPRGL…EREDGLDGET (189 aa)) are lumenal. The segment covering 39 to 75 (EETVEDSIIEDEDDEAEVEEDEPTDLVEDKEEEDVSG) has biased composition (acidic residues). Positions 39–83 (EETVEDSIIEDEDDEAEVEEDEPTDLVEDKEEEDVSGEPEASPSA) are disordered. N-linked (GlcNAc...) asparagine glycosylation is found at asparagine 136 and asparagine 191. A helical membrane pass occupies residues 208-228 (IFMYMFLAGLGLLVIVGLHQL). The Cytoplasmic portion of the chain corresponds to 229-286 (LESRKRKRPIQKVEMGTSSQNDVDMSWIPQETLNQINKASPRRLPRKRAQKRSVGSDE). The residue at position 247 (serine 247) is a Phosphoserine. Residue threonine 260 is modified to Phosphothreonine. Residues 261 to 286 (LNQINKASPRRLPRKRAQKRSVGSDE) are disordered. Serine 268 carries the post-translational modification Phosphoserine. The segment covering 268–279 (SPRRLPRKRAQK) has biased composition (basic residues).

The protein belongs to the TRAP-alpha family. In terms of assembly, heterotetramer of TRAP-alpha, TRAP-beta, TRAP-delta and TRAP-gamma. Interacts with palmitoylated calnexin (CALX), the interaction is required for efficient folding of glycosylated proteins.

It localises to the endoplasmic reticulum membrane. In terms of biological role, TRAP proteins are part of a complex whose function is to bind calcium to the ER membrane and thereby regulate the retention of ER resident proteins. May be involved in the recycling of the translocation apparatus after completion of the translocation process or may function as a membrane-bound chaperone facilitating folding of translocated proteins. The polypeptide is Translocon-associated protein subunit alpha (SSR1) (Homo sapiens (Human)).